The following is a 171-amino-acid chain: ATP synthase subunit b (171 aa).

A helical membrane pass occupies residues 32–52 (FFAVLLIFLIVLGVIAKWVVP).

This sequence belongs to the ATPase B chain family. As to quaternary structure, F-type ATPases have 2 components, F(1) - the catalytic core - and F(0) - the membrane proton channel. F(1) has five subunits: alpha(3), beta(3), gamma(1), delta(1), epsilon(1). F(0) has three main subunits: a(1), b(2) and c(10-14). The alpha and beta chains form an alternating ring which encloses part of the gamma chain. F(1) is attached to F(0) by a central stalk formed by the gamma and epsilon chains, while a peripheral stalk is formed by the delta and b chains.

Its subcellular location is the cell membrane. Its function is as follows. F(1)F(0) ATP synthase produces ATP from ADP in the presence of a proton or sodium gradient. F-type ATPases consist of two structural domains, F(1) containing the extramembraneous catalytic core and F(0) containing the membrane proton channel, linked together by a central stalk and a peripheral stalk. During catalysis, ATP synthesis in the catalytic domain of F(1) is coupled via a rotary mechanism of the central stalk subunits to proton translocation. In terms of biological role, component of the F(0) channel, it forms part of the peripheral stalk, linking F(1) to F(0). In Mycolicibacterium gilvum (strain PYR-GCK) (Mycobacterium gilvum (strain PYR-GCK)), this protein is ATP synthase subunit b.